Here is a 347-residue protein sequence, read N- to C-terminus: Quinolinate synthase (347 aa).

Positions 47 and 68 each coordinate iminosuccinate. Cysteine 113 contributes to the [4Fe-4S] cluster binding site. Iminosuccinate is bound by residues 139 to 141 (YAN) and serine 156. [4Fe-4S] cluster is bound at residue cysteine 200. Iminosuccinate contacts are provided by residues 226–228 (HPE) and threonine 243. Residue cysteine 297 coordinates [4Fe-4S] cluster.

It belongs to the quinolinate synthase family. Type 1 subfamily. The cofactor is [4Fe-4S] cluster.

It localises to the cytoplasm. The enzyme catalyses iminosuccinate + dihydroxyacetone phosphate = quinolinate + phosphate + 2 H2O + H(+). It functions in the pathway cofactor biosynthesis; NAD(+) biosynthesis; quinolinate from iminoaspartate: step 1/1. Its function is as follows. Catalyzes the condensation of iminoaspartate with dihydroxyacetone phosphate to form quinolinate. The polypeptide is Quinolinate synthase (Escherichia coli O157:H7).